Consider the following 264-residue polypeptide: 3-methyl-2-oxobutanoate hydroxymethyltransferase (264 aa).

Asp45 and Asp84 together coordinate Mg(2+). 3-methyl-2-oxobutanoate-binding positions include Asp45–Ser46, Asp84, and Lys112. Mg(2+) is bound at residue Glu114. Glu181 functions as the Proton acceptor in the catalytic mechanism.

This sequence belongs to the PanB family. Homodecamer; pentamer of dimers. It depends on Mg(2+) as a cofactor.

Its subcellular location is the cytoplasm. It catalyses the reaction 3-methyl-2-oxobutanoate + (6R)-5,10-methylene-5,6,7,8-tetrahydrofolate + H2O = 2-dehydropantoate + (6S)-5,6,7,8-tetrahydrofolate. Its pathway is cofactor biosynthesis; (R)-pantothenate biosynthesis; (R)-pantoate from 3-methyl-2-oxobutanoate: step 1/2. Functionally, catalyzes the reversible reaction in which hydroxymethyl group from 5,10-methylenetetrahydrofolate is transferred onto alpha-ketoisovalerate to form ketopantoate. The protein is 3-methyl-2-oxobutanoate hydroxymethyltransferase of Shewanella sediminis (strain HAW-EB3).